Reading from the N-terminus, the 435-residue chain is Trigger factor (435 aa).

One can recognise a PPIase FKBP-type domain in the interval 161-246; sequence DDQVTLDFEG…LTKVEEQILP (86 aa).

It belongs to the FKBP-type PPIase family. Tig subfamily.

It localises to the cytoplasm. It carries out the reaction [protein]-peptidylproline (omega=180) = [protein]-peptidylproline (omega=0). In terms of biological role, involved in protein export. Acts as a chaperone by maintaining the newly synthesized protein in an open conformation. Functions as a peptidyl-prolyl cis-trans isomerase. In Psychromonas ingrahamii (strain DSM 17664 / CCUG 51855 / 37), this protein is Trigger factor.